Reading from the N-terminus, the 460-residue chain is Flavin-containing monooxygenase FMO GS-OX-like 9 (460 aa).

FAD is bound at residue 20–25 (GAGPAG). 222–227 (GNSMSG) provides a ligand contact to NADP(+).

Belongs to the FMO family. Requires FAD as cofactor.

Its function is as follows. Catalyzes the conversion of methylthioalkyl glucosinolates of any chain length into methylsulfinylalkyl glucosinolates. In Arabidopsis thaliana (Mouse-ear cress), this protein is Flavin-containing monooxygenase FMO GS-OX-like 9.